Reading from the N-terminus, the 306-residue chain is Leucine-rich repeat-containing protein 75B (306 aa).

The tract at residues 1–22 (MGARLGRRARADAPAAPSAGPA) is disordered. A compositionally biased stretch (low complexity) spans 12-22 (DAPAAPSAGPA). 2 LRR repeats span residues 173-186 (LVVL…LSDE) and 198-211 (LPRL…GNRL).

Belongs to the LRRC75 family.

Functionally, may suppress myogenic differentiation by modulating MYOG expression and Erk1/2 signaling. In Mus musculus (Mouse), this protein is Leucine-rich repeat-containing protein 75B.